The chain runs to 147 residues: Small ribosomal subunit protein eS19 (147 aa).

It belongs to the eukaryotic ribosomal protein eS19 family. In terms of assembly, component of the small ribosomal subunit.

It localises to the cytoplasm. The protein localises to the nucleus. Functionally, component of the small ribosomal subunit. The ribosome is a large ribonucleoprotein complex responsible for the synthesis of proteins in the cell. Required for pre-rRNA processing and maturation of 40S ribosomal subunits. This Gillichthys mirabilis (Long-jawed mudsucker) protein is Small ribosomal subunit protein eS19 (rps19).